We begin with the raw amino-acid sequence, 193 residues long: 5'RNA triphosphatase A449R (193 aa).

The cofactor is Mn(2+).

It catalyses the reaction a 5'-end triphospho-ribonucleoside in mRNA + H2O = a 5'-end diphospho-ribonucleoside in mRNA + phosphate + H(+). In terms of biological role, catalyzes the first stes of cap formation: by removing the gamma-phosphate from the 5'-triphosphate end of nascent mRNA to yield a diphosphate end. This Chlorella (PBCV-1) protein is 5'RNA triphosphatase A449R (A449R).